The primary structure comprises 590 residues: Sperm-associated microtubule inner protein 4 (590 aa).

T219 is modified (phosphothreonine). S407 and S422 each carry phosphoserine. A Glycyl lysine isopeptide (Lys-Gly) (interchain with G-Cter in SUMO2) cross-link involves residue K427. Residue Y442 is modified to Phosphotyrosine. S485 is subject to Phosphoserine. Residue K545 forms a Glycyl lysine isopeptide (Lys-Gly) (interchain with G-Cter in SUMO2) linkage. The residue at position 547 (S547) is a Phosphoserine.

As to expression, predominantly expressed in the testes.

Its subcellular location is the cytoplasm. It localises to the cytoskeleton. The protein resides in the microtubule organizing center. The protein localises to the centrosome. It is found in the flagellum axoneme. In terms of biological role, microtubule inner protein (MIP) part of the dynein-decorated doublet microtubules (DMTs) in flagellum axoneme. May serve to reinforce and thus stabilize the microtubule structure in the sperm flagella. The protein is Sperm-associated microtubule inner protein 4 of Homo sapiens (Human).